The primary structure comprises 149 residues: Putative glycine cleavage system H protein 3 (149 aa).

One can recognise a Lipoyl-binding domain in the interval 39-121 (TCTLGITKYA…EDKGWLIKME (83 aa)). The residue at position 80 (lysine 80) is an N6-lipoyllysine.

Belongs to the GcvH family. The glycine cleavage system is composed of four proteins: P, T, L and H. (R)-lipoate serves as cofactor.

Its function is as follows. The glycine cleavage system catalyzes the degradation of glycine. The H protein shuttles the methylamine group of glycine from the P protein to the T protein. The polypeptide is Putative glycine cleavage system H protein 3 (gcvH3) (Dictyostelium discoideum (Social amoeba)).